Here is a 318-residue protein sequence, read N- to C-terminus: Protoheme IX farnesyltransferase (318 aa).

A run of 9 helical transmembrane segments spans residues 33–53 (VMSLVVFTALVGLVAAPVSVH), 54–74 (PFIGFCAILFIAIGGGASGAL), 102–122 (GEALALGLGLSGLSVMMLALA), 125–145 (VLAGAFLAFTIFFYVVVYTMW), 154–174 (IVIGGAAGAFPPVIGWIAATG), 181–201 (WLMFALTFMWTPPHFWALALF), 225–245 (VHILIYTILLALLALGTAFSN), 246–266 (IGGPIYLAVALVLNALFLLGA), and 288–308 (FFKLSLLYLFLHFGAILAEAL).

This sequence belongs to the UbiA prenyltransferase family. Protoheme IX farnesyltransferase subfamily. In terms of assembly, interacts with CtaA.

It is found in the cell inner membrane. It carries out the reaction heme b + (2E,6E)-farnesyl diphosphate + H2O = Fe(II)-heme o + diphosphate. It participates in porphyrin-containing compound metabolism; heme O biosynthesis; heme O from protoheme: step 1/1. In terms of biological role, converts heme B (protoheme IX) to heme O by substitution of the vinyl group on carbon 2 of heme B porphyrin ring with a hydroxyethyl farnesyl side group. The polypeptide is Protoheme IX farnesyltransferase (Ruegeria pomeroyi (strain ATCC 700808 / DSM 15171 / DSS-3) (Silicibacter pomeroyi)).